A 613-amino-acid polypeptide reads, in one-letter code: Kelch-like protein 36 (613 aa).

Positions 45 to 112 (CDVVLVVEEQ…LYSSELELDG (68 aa)) constitute a BTB domain. The BACK domain occupies 147 to 249 (YLYLQELASI…PEDILLQRVK (103 aa)). Kelch repeat units lie at residues 294 to 343 (CLLF…VLGG), 344 to 395 (FIFV…SIED), 396 to 442 (MLVA…IYKD), 444 to 491 (VYIS…SLGD), 492 to 544 (SIYS…VWQG), and 545 to 593 (RIYI…VCAL).

As to quaternary structure, interacts with CUL3.

It participates in protein modification; protein ubiquitination. Probable substrate-specific adapter of an E3 ubiquitin-protein ligase complex which mediates the ubiquitination and subsequent proteasomal degradation of target proteins. This is Kelch-like protein 36 (Klhl36) from Rattus norvegicus (Rat).